Reading from the N-terminus, the 240-residue chain is Purine nucleoside phosphorylase DeoD-type (240 aa).

H5 is an a purine D-ribonucleoside binding site. Phosphate contacts are provided by residues G21, R25, R44, and 88–91 (RVGS). A purine D-ribonucleoside is bound by residues 180–182 (EME) and 204–205 (SD). The active-site Proton donor is the D205.

Belongs to the PNP/UDP phosphorylase family. As to quaternary structure, homohexamer; trimer of homodimers.

It carries out the reaction a purine D-ribonucleoside + phosphate = a purine nucleobase + alpha-D-ribose 1-phosphate. The enzyme catalyses a purine 2'-deoxy-D-ribonucleoside + phosphate = a purine nucleobase + 2-deoxy-alpha-D-ribose 1-phosphate. Catalyzes the reversible phosphorolytic breakdown of the N-glycosidic bond in the beta-(deoxy)ribonucleoside molecules, with the formation of the corresponding free purine bases and pentose-1-phosphate. The chain is Purine nucleoside phosphorylase DeoD-type from Actinobacillus pleuropneumoniae serotype 5b (strain L20).